The chain runs to 310 residues: Porphobilinogen deaminase (310 aa).

Cysteine 242 is modified (S-(dipyrrolylmethanemethyl)cysteine).

It belongs to the HMBS family. In terms of assembly, monomer. The cofactor is dipyrromethane.

It carries out the reaction 4 porphobilinogen + H2O = hydroxymethylbilane + 4 NH4(+). The protein operates within porphyrin-containing compound metabolism; protoporphyrin-IX biosynthesis; coproporphyrinogen-III from 5-aminolevulinate: step 2/4. In terms of biological role, tetrapolymerization of the monopyrrole PBG into the hydroxymethylbilane pre-uroporphyrinogen in several discrete steps. In Shewanella sp. (strain ANA-3), this protein is Porphobilinogen deaminase.